A 449-amino-acid chain; its full sequence is Trigger factor (449 aa).

Positions 173 to 258 (GDRVTLDFVG…LKKVEWAHLP (86 aa)) constitute a PPIase FKBP-type domain.

This sequence belongs to the FKBP-type PPIase family. Tig subfamily.

It localises to the cytoplasm. It catalyses the reaction [protein]-peptidylproline (omega=180) = [protein]-peptidylproline (omega=0). In terms of biological role, involved in protein export. Acts as a chaperone by maintaining the newly synthesized protein in an open conformation. Functions as a peptidyl-prolyl cis-trans isomerase. In Cupriavidus metallidurans (strain ATCC 43123 / DSM 2839 / NBRC 102507 / CH34) (Ralstonia metallidurans), this protein is Trigger factor.